Consider the following 170-residue polypeptide: MPRSRVNGNFIDKTSSIVANILLRIIPTTSGEKKAFTYYRDGMLAQSEGNYAEALQNYYEAMRLEIDPYDRSYILYNIGLIHTSNGEHTKALEYYFRALERNPFLPQAFNNMAVICHYRGEQAILQGDSEIAEAWFDQAAEYWKQAIALTPGNYIEAQNWLKITKRFEFE.

TPR repeat units follow at residues 35 to 68 (AFTY…EIDP), 72 to 105 (SYIL…NPFL), and 120 to 153 (GEQA…TPGN).

Belongs to the Ycf3 family.

It is found in the plastid. The protein localises to the chloroplast thylakoid membrane. Its function is as follows. Essential for the assembly of the photosystem I (PSI) complex. May act as a chaperone-like factor to guide the assembly of the PSI subunits. The chain is Photosystem I assembly protein Ycf3 from Triticum aestivum (Wheat).